Consider the following 615-residue polypeptide: 1-deoxy-D-xylulose-5-phosphate synthase (615 aa).

Residues His77 and Gly118–Ser120 each bind thiamine diphosphate. Asp149 contributes to the Mg(2+) binding site. Residues Gly150–Ala151, Asn178, Tyr286, and Glu367 each bind thiamine diphosphate. Asn178 provides a ligand contact to Mg(2+).

The protein belongs to the transketolase family. DXPS subfamily. As to quaternary structure, homodimer. The cofactor is Mg(2+). It depends on thiamine diphosphate as a cofactor.

The enzyme catalyses D-glyceraldehyde 3-phosphate + pyruvate + H(+) = 1-deoxy-D-xylulose 5-phosphate + CO2. It functions in the pathway metabolic intermediate biosynthesis; 1-deoxy-D-xylulose 5-phosphate biosynthesis; 1-deoxy-D-xylulose 5-phosphate from D-glyceraldehyde 3-phosphate and pyruvate: step 1/1. Catalyzes the acyloin condensation reaction between C atoms 2 and 3 of pyruvate and glyceraldehyde 3-phosphate to yield 1-deoxy-D-xylulose-5-phosphate (DXP). This chain is 1-deoxy-D-xylulose-5-phosphate synthase, found in Glaesserella parasuis serovar 5 (strain SH0165) (Haemophilus parasuis).